Reading from the N-terminus, the 386-residue chain is 1-deoxy-D-xylulose 5-phosphate reductoisomerase (386 aa).

Thr13, Gly14, Ser15, Ile16, Asn40, and Asn122 together coordinate NADPH. Residue Lys123 coordinates 1-deoxy-D-xylulose 5-phosphate. Residue Glu124 coordinates NADPH. Asp148 is a Mn(2+) binding site. Positions 149, 150, 177, and 201 each coordinate 1-deoxy-D-xylulose 5-phosphate. Residue Glu150 participates in Mn(2+) binding. NADPH is bound at residue Gly207. Ser214, Asn219, Lys220, and Glu223 together coordinate 1-deoxy-D-xylulose 5-phosphate. Glu223 provides a ligand contact to Mn(2+).

It belongs to the DXR family. Mg(2+) serves as cofactor. Requires Mn(2+) as cofactor.

The catalysed reaction is 2-C-methyl-D-erythritol 4-phosphate + NADP(+) = 1-deoxy-D-xylulose 5-phosphate + NADPH + H(+). Its pathway is isoprenoid biosynthesis; isopentenyl diphosphate biosynthesis via DXP pathway; isopentenyl diphosphate from 1-deoxy-D-xylulose 5-phosphate: step 1/6. Its function is as follows. Catalyzes the NADPH-dependent rearrangement and reduction of 1-deoxy-D-xylulose-5-phosphate (DXP) to 2-C-methyl-D-erythritol 4-phosphate (MEP). The sequence is that of 1-deoxy-D-xylulose 5-phosphate reductoisomerase from Francisella tularensis subsp. holarctica (strain OSU18).